We begin with the raw amino-acid sequence, 327 residues long: Ribonucleoside-diphosphate reductase small chain (327 aa).

Residues aspartate 70, glutamate 101, and histidine 104 each coordinate Fe cation. The active site involves tyrosine 108. Fe cation is bound by residues glutamate 164, glutamate 198, and histidine 201.

Belongs to the ribonucleoside diphosphate reductase small chain family. As to quaternary structure, heterotetramer composed of a homodimer of the large subunit (R1) and a homodimer of the small subunit (R2). Larger multisubunit protein complex are also active, composed of (R1)n(R2)n. It depends on Fe cation as a cofactor.

It carries out the reaction a 2'-deoxyribonucleoside 5'-diphosphate + [thioredoxin]-disulfide + H2O = a ribonucleoside 5'-diphosphate + [thioredoxin]-dithiol. Its function is as follows. Ribonucleoside-diphosphate reductase holoenzyme provides the precursors necessary for viral DNA synthesis. Allows virus growth in non-dividing cells. Catalyzes the biosynthesis of deoxyribonucleotides from the corresponding ribonucleotides. In Ornithodoros (relapsing fever ticks), this protein is Ribonucleoside-diphosphate reductase small chain.